A 455-amino-acid chain; its full sequence is Bifunctional protein GlmU (455 aa).

The tract at residues 1–228 is pyrophosphorylase; the sequence is MYKCALVLAA…FEETIGVNSR (228 aa). UDP-N-acetyl-alpha-D-glucosamine contacts are provided by residues 8–11, Lys22, Gln73, and 78–79; these read LAAG and GT. Asp103 is a Mg(2+) binding site. The UDP-N-acetyl-alpha-D-glucosamine site is built by Gly140, Glu154, Asn169, and Asn226. A Mg(2+)-binding site is contributed by Asn226. The linker stretch occupies residues 229 to 249; sequence AQLAQAEEILKDRINLKHMEN. The segment at 250–455 is N-acetyltransferase; the sequence is GVTLIDPKTT…GWVDKKGLKK (206 aa). Residues Arg331 and Lys349 each contribute to the UDP-N-acetyl-alpha-D-glucosamine site. The active-site Proton acceptor is the His361. UDP-N-acetyl-alpha-D-glucosamine contacts are provided by Tyr364 and Asn375. Residues 384 to 385, Ala421, and Arg438 each bind acetyl-CoA; that span reads NY.

The protein in the N-terminal section; belongs to the N-acetylglucosamine-1-phosphate uridyltransferase family. It in the C-terminal section; belongs to the transferase hexapeptide repeat family. As to quaternary structure, homotrimer. The cofactor is Mg(2+).

It is found in the cytoplasm. The catalysed reaction is alpha-D-glucosamine 1-phosphate + acetyl-CoA = N-acetyl-alpha-D-glucosamine 1-phosphate + CoA + H(+). The enzyme catalyses N-acetyl-alpha-D-glucosamine 1-phosphate + UTP + H(+) = UDP-N-acetyl-alpha-D-glucosamine + diphosphate. Its pathway is nucleotide-sugar biosynthesis; UDP-N-acetyl-alpha-D-glucosamine biosynthesis; N-acetyl-alpha-D-glucosamine 1-phosphate from alpha-D-glucosamine 6-phosphate (route II): step 2/2. The protein operates within nucleotide-sugar biosynthesis; UDP-N-acetyl-alpha-D-glucosamine biosynthesis; UDP-N-acetyl-alpha-D-glucosamine from N-acetyl-alpha-D-glucosamine 1-phosphate: step 1/1. It functions in the pathway bacterial outer membrane biogenesis; LPS lipid A biosynthesis. Its function is as follows. Catalyzes the last two sequential reactions in the de novo biosynthetic pathway for UDP-N-acetylglucosamine (UDP-GlcNAc). The C-terminal domain catalyzes the transfer of acetyl group from acetyl coenzyme A to glucosamine-1-phosphate (GlcN-1-P) to produce N-acetylglucosamine-1-phosphate (GlcNAc-1-P), which is converted into UDP-GlcNAc by the transfer of uridine 5-monophosphate (from uridine 5-triphosphate), a reaction catalyzed by the N-terminal domain. This Clostridium botulinum (strain Eklund 17B / Type B) protein is Bifunctional protein GlmU.